Consider the following 257-residue polypeptide: High-affinity copper transporter ctrC (257 aa).

2 helical membrane-spanning segments follow: residues 79–99 (RGMF…LEFL) and 202–222 (YFNG…SFIF).

This sequence belongs to the copper transporter (Ctr) (TC 1.A.56) family. SLC31A subfamily.

The protein localises to the cell membrane. It carries out the reaction Cu(2+)(in) = Cu(2+)(out). Functionally, high-affinity copper transporter of plasma membrane that mediates copper uptake under low copper conditions. The mechanism driving the transmembrane transport of copper has still to be determined. Acts as a potential virulence factor. The polypeptide is High-affinity copper transporter ctrC (Aspergillus fumigatus (strain ATCC MYA-4609 / CBS 101355 / FGSC A1100 / Af293) (Neosartorya fumigata)).